A 64-amino-acid polypeptide reads, in one-letter code: Alpha-conotoxin GI (64 aa).

The first 21 residues, 1–21 (MGMRMMFTVFLLVVLATTVVS), serve as a signal peptide directing secretion. Positions 22–49 (FPSERASDGRDDTAKDEGSDMDKLVEKK) are excised as a propeptide. 2 disulfide bridges follow: C51–C56 and C52–C62. Residue C62 is modified to Cysteine amide.

It belongs to the conotoxin A superfamily. Post-translationally, not hydroxylated; hydroxylation, on a synthetic hydroxylated GI, improves its folding but impairs its activity against target receptors. In terms of tissue distribution, expressed by the venom duct.

The protein localises to the secreted. Its function is as follows. Alpha-conotoxins act on postsynaptic membranes, they bind to the nicotinic acetylcholine receptors (nAChR) and thus inhibit them. Reversibly inhibits mammalian muscle nAChR (IC(50)=339 nM on adult subtype (alpha-1-beta-1-gamma-delta/CHRNA1-CHRNB1-CHRNG-CHRND) and IC(50)=5.86-995 nM on fetal subtype (alpha-1-beta-1-delta-epsilon/CHRNA1-CHRNB1-CHRND-CHRNE)). The higher affinity site is the alpha/delta site on mouse muscle-derived BC3H-1 receptor, and the other site (alpha/gamma site) on nicotinic receptors from Torpedo californica electric organ. This chain is Alpha-conotoxin GI, found in Conus geographus (Geography cone).